Here is a 295-residue protein sequence, read N- to C-terminus: Ribosomal RNA small subunit methyltransferase A (295 aa).

S-adenosyl-L-methionine is bound by residues Asn-25, Leu-27, Gly-52, Glu-73, Asp-98, and Asn-120.

It belongs to the class I-like SAM-binding methyltransferase superfamily. rRNA adenine N(6)-methyltransferase family. RsmA subfamily.

The protein localises to the cytoplasm. The catalysed reaction is adenosine(1518)/adenosine(1519) in 16S rRNA + 4 S-adenosyl-L-methionine = N(6)-dimethyladenosine(1518)/N(6)-dimethyladenosine(1519) in 16S rRNA + 4 S-adenosyl-L-homocysteine + 4 H(+). In terms of biological role, specifically dimethylates two adjacent adenosines (A1518 and A1519) in the loop of a conserved hairpin near the 3'-end of 16S rRNA in the 30S particle. May play a critical role in biogenesis of 30S subunits. This Desulfotalea psychrophila (strain LSv54 / DSM 12343) protein is Ribosomal RNA small subunit methyltransferase A.